A 284-amino-acid polypeptide reads, in one-letter code: 2-dehydro-3-deoxyphosphooctonate aldolase (284 aa).

This sequence belongs to the KdsA family.

The protein resides in the cytoplasm. It catalyses the reaction D-arabinose 5-phosphate + phosphoenolpyruvate + H2O = 3-deoxy-alpha-D-manno-2-octulosonate-8-phosphate + phosphate. Its pathway is carbohydrate biosynthesis; 3-deoxy-D-manno-octulosonate biosynthesis; 3-deoxy-D-manno-octulosonate from D-ribulose 5-phosphate: step 2/3. It participates in bacterial outer membrane biogenesis; lipopolysaccharide biosynthesis. This chain is 2-dehydro-3-deoxyphosphooctonate aldolase, found in Salmonella enteritidis PT4 (strain P125109).